The following is a 484-amino-acid chain: MTLRLHDSRTQSLRDFVPLVDGRVGIYVCGPTVQSAPHIGHLRSALAYDQLRRWLTHRGLDVTLVRNVTDIDDKVIDNARRGQEAGGTEEWWALAYRVELEFSRAYSALGILPPSYEPRATASIGEMQEIIRRLVERGHAYAADDRSGDVYFDTASWPEYGELTRQRAADMEAAADADPRAKRDVRDFALWKGAKPGEPASASWPSPWGSGRPGWHIECSAMSTRYLGAEFDIHGGGLDLRFPHHENELAQSRAAGDPFARYWLHNGLVAVAGQKMSKSLGNSLFAADLLASARPVVVRYFLGSAHYRSTLEFHDGALAEAEAALDRIETFLDRSARRLAGTRFQAAPAAPDGSPAAVPDEFAEAMDDDLSVPQALAVLHDAVRAGNAALDAGDLQEAASLRADVSAMVAVLGIDPLADEWRTASDQPARRALQALVEHRIAERQTAREARDFALADRIRQELAEAGITIEDSPGGSHWSIDGE.

A Zn(2+)-binding site is contributed by cysteine 29. The short motif at 31–41 is the 'HIGH' region element; sequence PTVQSAPHIGH. Cysteine 219, histidine 244, and glutamate 248 together coordinate Zn(2+). Positions 275 to 279 match the 'KMSKS' region motif; the sequence is KMSKS. Lysine 278 is an ATP binding site.

It belongs to the class-I aminoacyl-tRNA synthetase family. Monomer. Zn(2+) is required as a cofactor.

It localises to the cytoplasm. It carries out the reaction tRNA(Cys) + L-cysteine + ATP = L-cysteinyl-tRNA(Cys) + AMP + diphosphate. The protein is Cysteine--tRNA ligase of Clavibacter michiganensis subsp. michiganensis (strain NCPPB 382).